We begin with the raw amino-acid sequence, 644 residues long: Exoribonuclease 2 (644 aa).

An RNB domain is found at 189–516; sequence REDLTALNFV…NHRLLKAVIT (328 aa). Positions 561–643 constitute an S1 motif domain; it reads DIRFNAEIID…ETRGIVAKPA (83 aa).

Belongs to the RNR ribonuclease family. RNase II subfamily.

The protein resides in the cytoplasm. It carries out the reaction Exonucleolytic cleavage in the 3'- to 5'-direction to yield nucleoside 5'-phosphates.. Involved in mRNA degradation. Hydrolyzes single-stranded polyribonucleotides processively in the 3' to 5' direction. This is Exoribonuclease 2 from Pectobacterium atrosepticum (strain SCRI 1043 / ATCC BAA-672) (Erwinia carotovora subsp. atroseptica).